The sequence spans 66 residues: ARDGYIVHDGTNCKYSCEFGSEYKYCGPLCEKKKAKTGYCYLFACWCIEVPDEVRVWGEDGFMCWS.

Residues 2–65 enclose the LCN-type CS-alpha/beta domain; the sequence is RDGYIVHDGT…VWGEDGFMCW (64 aa). 4 disulfides stabilise this stretch: C13-C64, C17-C40, C26-C45, and C30-C47.

It belongs to the long (4 C-C) scorpion toxin superfamily. Sodium channel inhibitor family. Beta subfamily. Expressed by the venom gland.

It localises to the secreted. In terms of biological role, this protein is not toxic. In Androctonus australis (Sahara scorpion), this protein is Neurotoxin-like protein STR1.